We begin with the raw amino-acid sequence, 495 residues long: MARRSRLRRLLLLLLLPVASTSDAEHRLFERLFEDYNEIIRPVANVSDPVIIQFEVSMSQLVKVDEVNQIMETNLWLKQIWNDYKLKWNPSDYDGAEFMRVPAEKIWKPDIVLYNNAVGDFQVDDKTKALLKYTGEVTWIPPAIFKSSCKIDVTYFPFDYQNCTMKFGSWSYDKAKIDLVLIGSSMNLKDYWESGEWAIIKAPGYKHDIKYNCCEEIYPDITYSLYIRRLPLFYTINLIIPCLLISFLTVLVFYLPSDCGEKVTLCISVLLSLTVFLLVITETIPSTSLVIPLIGEYLLFTMIFVTLSIVITVFVLNVHYRTPTTHTMPAWVKTIFLNLLPRVMFMTRPASNEGNTQRPRPFYSAELSNLNCFSRIESKVCKEGYPCQDGLCGYCHHRRAKISNFSANLTRSSSSESVDAVLSLSALSPEIKEAIQSVKYIAENMKAQNEAKEIQDDWKYVAMVIDRIFLWVFILVCILGTAGLFLQPLMTRDDA.

A signal peptide spans 1–21; that stretch reads MARRSRLRRLLLLLLLPVAST. The Extracellular segment spans residues 22-240; sequence SDAEHRLFER…PLFYTINLII (219 aa). Asn45 and Asn162 each carry an N-linked (GlcNAc...) asparagine glycan. Disulfide bonds link Cys149-Cys163 and Cys213-Cys214. The chain crosses the membrane as a helical span at residues 241–256; it reads PCLLISFLTVLVFYLP. Residues 257–258 lie on the Cytoplasmic side of the membrane; that stretch reads SD. Residues 259 to 275 traverse the membrane as a helical segment; the sequence is CGEKVTLCISVLLSLTV. Glu261 contributes to the Na(+) binding site. The Extracellular portion of the chain corresponds to 276–297; that stretch reads FLLVITETIPSTSLVIPLIGEY. The helical transmembrane segment at 298 to 316 threads the bilayer; it reads LLFTMIFVTLSIVITVFVL. Residues 317–464 are Cytoplasmic-facing; that stretch reads NVHYRTPTTH…QDDWKYVAMV (148 aa). A phosphoserine mark is found at Ser403 and Ser406. The helical transmembrane segment at 465 to 483 threads the bilayer; sequence IDRIFLWVFILVCILGTAG. Over 484–495 the chain is Extracellular; sequence LFLQPLMTRDDA.

This sequence belongs to the ligand-gated ion channel (TC 1.A.9) family. Acetylcholine receptor (TC 1.A.9.1) subfamily. Alpha-3/CHRNA3 sub-subfamily. In terms of assembly, neuronal AChR is composed of two different types of subunits: alpha and beta. CHRNA3/Alpha-3 subunit can be combined to CHRNB2/beta-2 or CHRNB4/beta-4 to give rise to functional receptors. Part of a complex composed of STUB1/CHIP, VCP/p97, CHRNA3, and UBXN2A that modulates the ubiquitination and endoplasmic reticulum-associated degradation (ERAD) of CHRNA3. Within the complex UBXN2A acts as a scaffold protein required for the interaction of CHRNA3 with VCP/p97, this interaction also inhibits CHRNA3 ubiquitination by STUB1/CHIP and subsequently ERAD. Interacts with UBXN2A (via SEP domain), the interaction is required for the interaction of CHRNA3 in the STUB1:VCP:UBXN2A complex. Interacts with RIC3; which is required for proper folding and assembly. Interacts with LYPD6. In terms of processing, ubiquitinated; by STUB1/CHIP and thereafter degraded by the 26S proteosome complex.

The protein resides in the synaptic cell membrane. It is found in the cell membrane. The protein localises to the endoplasmic reticulum. Its subcellular location is the golgi apparatus. It carries out the reaction K(+)(in) = K(+)(out). The enzyme catalyses Na(+)(in) = Na(+)(out). It catalyses the reaction Ca(2+)(in) = Ca(2+)(out). Activated by a myriad of ligands such as acetylcholine, cytisine, nicotine, choline and epibatidine. The heteropentamer CHRNA3:CHRNB2 activity is blocked by alpha-conotoxins ImI, ImII, PnIA, GID and MII. The heteropentamer CHRNA3:CHRNB4 activity is blocked by the alpha-conotoxin ImI and AuIB. Its function is as follows. Component of neuronal acetylcholine receptors (nAChRs) that function as pentameric, ligand-gated cation channels with high calcium permeability among other activities. nAChRs are excitatory neurotrasnmitter receptors formed by a collection of nAChR subunits known to mediate synaptic transmission in the nervous system and the neuromuscular junction. Each nAchR subunit confers differential attributes to channel properties, including activation, deactivation and desensitization kinetics, pH sensitivity, cation permeability, and binding to allosteric modulators. CHRNA3 forms heteropentameric neuronal acetylcholine receptors with CHRNB2 and CHRNB4. CHRNA3:CHRNB4 being predominant in neurons of the autonomic ganglia, it is known as ganglionic nicotinic receptor. CHRNA3:CHRNB4 also plays an important role in the habenulo-interpeduncular tract, modulating the mesolimbic dopamine system and affecting reward circuits and addiction. Hypothalamic CHRNA3:CHRNB4 nAChR activation by nicotine leads to activation of POMC neurons and a decrease in food intake. Also expressed in the urothelium where it modulates reflex bladder activity by increasing intracellular calcium through extracellular influx and basal ATP release. The protein is Neuronal acetylcholine receptor subunit alpha-3 (CHRNA3) of Bos taurus (Bovine).